Reading from the N-terminus, the 161-residue chain is Protein-export protein SecB (161 aa).

Belongs to the SecB family. Homotetramer, a dimer of dimers. One homotetramer interacts with 1 SecA dimer.

The protein localises to the cytoplasm. One of the proteins required for the normal export of preproteins out of the cell cytoplasm. It is a molecular chaperone that binds to a subset of precursor proteins, maintaining them in a translocation-competent state. It also specifically binds to its receptor SecA. The sequence is that of Protein-export protein SecB from Pseudomonas fluorescens (strain Pf0-1).